Consider the following 209-residue polypeptide: Large ribosomal subunit protein uL3 (209 aa).

Residue Gln150 is modified to N5-methylglutamine.

The protein belongs to the universal ribosomal protein uL3 family. Part of the 50S ribosomal subunit. Forms a cluster with proteins L14 and L19. Methylated by PrmB.

Functionally, one of the primary rRNA binding proteins, it binds directly near the 3'-end of the 23S rRNA, where it nucleates assembly of the 50S subunit. The chain is Large ribosomal subunit protein uL3 from Vibrio cholerae serotype O1 (strain ATCC 39541 / Classical Ogawa 395 / O395).